We begin with the raw amino-acid sequence, 631 residues long: MVDFPTRFDVIVIGGGHAGTEAALAAARMGVKTLLLTHNVETLGQMSCNPAIGGIGKSHLVKEIDALGGAMAEATDKGGIQFRILNSRKGPAVRATRAQADRVLYKAAIRHTLENQPNLWIFQQACDDLIVEQDQVRGVVTQMGLRFHADNVVLTTGTFLGGLIHIGLENYSGGRAGDPPSIALARRLRELPLRVGRLKTGTPPRIDGRSVVFSVMTEQPGDTPIPVMSFLGSKEQHPEQVSCWITHTNARTHEIIAANLDRSPMYSGVIEGIGPRYCPSIEDKIHRFADKESHQVFLEPEGLTTHELYPNGISTSLPFDVQLQIVRSIRGMENAHIVRPGYAIEYDFFDPRDLKYSLETKVIGGLFFAGQINGTTGYEEAGAQGLLAGANAALRAQGKDSWCPRRDEAYIGVLVDDLITLGTQEPYRMFTSRAEYRLILREDNADLRLTEKGRELGLVDDRRWAAFEAKREGIEREEQRLKSTWVRPNTPQGEAIAERFGTPLTHEYNLLNLLSRPEIDYASLVEITGDAVDNPQVAEQVEIRTKYAGYIDRQQEEIARLRASEDTRLPVDIDYLGISGLSKEIQNKLNQARPETLGQASRIPGVTPAAISLLLIHLKKRASGRQLEQSA.

14 to 19 provides a ligand contact to FAD; the sequence is GGGHAG. NAD(+) is bound at residue 274 to 288; the sequence is GPRYCPSIEDKIHRF.

It belongs to the MnmG family. As to quaternary structure, homodimer. Heterotetramer of two MnmE and two MnmG subunits. It depends on FAD as a cofactor.

Its subcellular location is the cytoplasm. In terms of biological role, NAD-binding protein involved in the addition of a carboxymethylaminomethyl (cmnm) group at the wobble position (U34) of certain tRNAs, forming tRNA-cmnm(5)s(2)U34. The chain is tRNA uridine 5-carboxymethylaminomethyl modification enzyme MnmG from Pseudomonas paraeruginosa (strain DSM 24068 / PA7) (Pseudomonas aeruginosa (strain PA7)).